The chain runs to 143 residues: Holo-[acyl-carrier-protein] synthase (143 aa).

Mg(2+)-binding residues include aspartate 9 and glutamate 63.

The protein belongs to the P-Pant transferase superfamily. AcpS family. It depends on Mg(2+) as a cofactor.

The protein localises to the cytoplasm. It catalyses the reaction apo-[ACP] + CoA = holo-[ACP] + adenosine 3',5'-bisphosphate + H(+). Its function is as follows. Transfers the 4'-phosphopantetheine moiety from coenzyme A to a Ser of acyl-carrier-protein. The protein is Holo-[acyl-carrier-protein] synthase of Burkholderia pseudomallei (strain 1106a).